The sequence spans 230 residues: Large ribosomal subunit protein uL1 (230 aa).

Belongs to the universal ribosomal protein uL1 family. In terms of assembly, part of the 50S ribosomal subunit.

Binds directly to 23S rRNA. The L1 stalk is quite mobile in the ribosome, and is involved in E site tRNA release. Its function is as follows. Protein L1 is also a translational repressor protein, it controls the translation of the L11 operon by binding to its mRNA. This Bacillus anthracis (strain A0248) protein is Large ribosomal subunit protein uL1.